Consider the following 244-residue polypeptide: Ferredoxin--NADP reductase B (244 aa).

The 103-residue stretch at Ala-4 to Asp-106 folds into the FAD-binding FR-type domain. FAD contacts are provided by residues Arg-55–Ser-58 and Thr-120.

The protein belongs to the ferredoxin--NADP reductase type 1 family. FAD is required as a cofactor.

It catalyses the reaction 2 reduced [4Fe-4S]-[ferredoxin] + NADP(+) + H(+) = 2 oxidized [4Fe-4S]-[ferredoxin] + NADPH. In terms of biological role, transports electrons between NADPH and ferredoxin. Can transfer electrons to ferredoxins Fdx2 and Fdx8. Prefers NADPH to NADH. This is Ferredoxin--NADP reductase B from Sorangium cellulosum (strain So ce56) (Polyangium cellulosum (strain So ce56)).